The primary structure comprises 380 residues: MAPTMRKTHPLLKIINNSLIDLPTPSNISYLWNYGSLLGLCLMTQILTGLFLAMHYTADTATAFSSLAHICRDVNYGWLMRNIHANGASFFFICIYLHIGRGIYYGSYLFKETWNIGVILLLLVMATAFVGYVLPWGQMSFWGATVITNILSAIPYIGNNLVQWVWGGFAVDNATLTRFFTFHFLLPFLIAGTSMLHLLFLHETGSNNPTGLNSNSDKIPFHPYFSYKDTFGFMIMLAALALLSTTNPNLMSDPENFTPANPLVTPPHIKPEWYFLFAYAILRSIPNKLGGVLALLFSIMILMLIPSLHTAKQRSMMFRPLSQLMFWSIIANTLVLTWIGGQPVEDPFILIGQISSALYFILFLVLLPLTNWSDNKMLNL.

4 helical membrane-spanning segments follow: residues 34 to 54 (YGSLLGLCLMTQILTGLFLAM), 78 to 99 (WLMRNIHANGASFFFICIYLHI), 114 to 134 (WNIGVILLLLVMATAFVGYVL), and 179 to 199 (FFTFHFLLPFLIAGTSMLHLL). His84 and His98 together coordinate heme b. Residues His183 and His197 each contribute to the heme b site. His202 contributes to the a ubiquinone binding site. 4 helical membrane passes run 227 to 247 (YKDTFGFMIMLAALALLSTTN), 289 to 309 (LGGVLALLFSIMILMLIPSLH), 321 to 341 (LSQLMFWSIIANTLVLTWIGG), and 348 to 368 (FILIGQISSALYFILFLVLLP).

It belongs to the cytochrome b family. The cytochrome bc1 complex contains 3 respiratory subunits (MT-CYB, CYC1 and UQCRFS1), 2 core proteins (UQCRC1 and UQCRC2) and probably 6 low-molecular weight proteins. Heme b is required as a cofactor.

It localises to the mitochondrion inner membrane. Component of the ubiquinol-cytochrome c reductase complex (complex III or cytochrome b-c1 complex) that is part of the mitochondrial respiratory chain. The b-c1 complex mediates electron transfer from ubiquinol to cytochrome c. Contributes to the generation of a proton gradient across the mitochondrial membrane that is then used for ATP synthesis. In Typhlonectes natans (Rubber eel), this protein is Cytochrome b (mt-cyb).